We begin with the raw amino-acid sequence, 156 residues long: Putative NrdI-like protein (156 aa).

Belongs to the NrdI family.

In Streptococcus pneumoniae serotype 4 (strain ATCC BAA-334 / TIGR4), this protein is Putative NrdI-like protein.